Here is a 140-residue protein sequence, read N- to C-terminus: Holo-[acyl-carrier-protein] synthase (140 aa).

The Mg(2+) site is built by Asp-8 and Glu-62.

Belongs to the P-Pant transferase superfamily. AcpS family. It depends on Mg(2+) as a cofactor.

The protein localises to the cytoplasm. It carries out the reaction apo-[ACP] + CoA = holo-[ACP] + adenosine 3',5'-bisphosphate + H(+). Functionally, transfers the 4'-phosphopantetheine moiety from coenzyme A to a Ser of acyl-carrier-protein. The polypeptide is Holo-[acyl-carrier-protein] synthase (Cupriavidus taiwanensis (strain DSM 17343 / BCRC 17206 / CCUG 44338 / CIP 107171 / LMG 19424 / R1) (Ralstonia taiwanensis (strain LMG 19424))).